Reading from the N-terminus, the 112-residue chain is Large ribosomal subunit protein uL24 (112 aa).

Belongs to the universal ribosomal protein uL24 family. As to quaternary structure, part of the 50S ribosomal subunit.

Its function is as follows. One of two assembly initiator proteins, it binds directly to the 5'-end of the 23S rRNA, where it nucleates assembly of the 50S subunit. Functionally, one of the proteins that surrounds the polypeptide exit tunnel on the outside of the subunit. The protein is Large ribosomal subunit protein uL24 of Magnetococcus marinus (strain ATCC BAA-1437 / JCM 17883 / MC-1).